Consider the following 288-residue polypeptide: Syntaxin-1A (288 aa).

Over 1 to 265 the chain is Cytoplasmic; sequence MKDRTQELRT…KYQSKARRKK (265 aa). A phosphoserine mark is found at Ser-14, Ser-64, and Ser-95. A coiled-coil region spans residues 68–109; that stretch reads DEKTKEELEELMSDIKKTANKVRSKLKSIEQSIEQEEGLNRS. Ser-188 bears the Phosphoserine; by DAPK1 mark. The 63-residue stretch at 192-254 folds into the t-SNARE coiled-coil homology domain; sequence LSEIETRHSE…ERAVSDTKKA (63 aa). Glycyl lysine isopeptide (Lys-Gly) (interchain with G-Cter in SUMO) cross-links involve residues Lys-252, Lys-253, and Lys-256. A helical; Anchor for type IV membrane protein transmembrane segment spans residues 266 to 286; the sequence is IMIIICCVILGIVIASTVGGI. Residues 287–288 lie on the Extracellular side of the membrane; the sequence is FA.

The protein belongs to the syntaxin family. As to quaternary structure, part of the SNARE core complex containing SNAP25, VAMP2 and STX1A; this complex constitutes the basic catalytic machinery of the complex neurotransmitter release apparatus. The SNARE complex interacts with CPLX1. Interacts with STXBP1. The interaction with STXBP1 promotes assembly of the SNARE complex. Interacts (via C-terminus) with KCNB1 (via C-terminus); the interaction increases in a calcium-dependent manner and induces a pore-independent enhancement of exocytosis in neuroendocrine cells, chromaffin cells, pancreatic beta cells and from the soma of dorsal root ganglia (DRG) neurons. Interacts with SYTL4. Interacts with STXBP6. Interacts with PLCL1 (via C2 domain). Interacts with OTOF. Interacts with LGI3. Interacts (via the H3 domain) with SLC6A4 (via the N-terminus); this interaction regulates SLC4A6 channel conductance in thalamocortical neurons. Interacts with SYT6 and SYT8; the interaction is Ca(2+)-dependent. Interacts with VAMP8. Interacts with SNAP23. Interacts with VAPA and SYBU. Interacts with PRRT2. Interacts with SEPT8. Interacts with STXBP5L. Interacts with synaptotagmin-1/SYT1. Interacts with SEPTIN5; in the cerebellar cortex. Interacts with SEPTIN4; in the striatum. In terms of processing, phosphorylated by CK2. Phosphorylation at Ser-188 by DAPK1 significantly decreases its interaction with STXBP1. Sumoylated, sumoylation is required for regulation of synaptic vesicle endocytosis. As to expression, highly expressed in embryonic spinal cord and ganglia and in adult cerebellum and cerebral cortex. In terms of tissue distribution, expressed in heart, liver, fat, skeletal muscle, kidney and brain.

The protein localises to the cytoplasmic vesicle. Its subcellular location is the secretory vesicle. It localises to the synaptic vesicle membrane. The protein resides in the synapse. It is found in the synaptosome. The protein localises to the cell membrane. Its subcellular location is the secreted. Functionally, plays an essential role in hormone and neurotransmitter calcium-dependent exocytosis and endocytosis. Part of the SNARE (Soluble NSF Attachment Receptor) complex composed of SNAP25, STX1A and VAMP2 which mediates the fusion of synaptic vesicles with the presynaptic plasma membrane. STX1A and SNAP25 are localized on the plasma membrane while VAMP2 resides in synaptic vesicles. The pairing of the three SNAREs from the N-terminal SNARE motifs to the C-terminal anchors leads to the formation of the SNARE complex, which brings membranes into close proximity and results in final fusion. Participates in the calcium-dependent regulation of acrosomal exocytosis in sperm. Also plays an important role in the exocytosis of hormones such as insulin or glucagon-like peptide 1 (GLP-1). This Homo sapiens (Human) protein is Syntaxin-1A (STX1A).